We begin with the raw amino-acid sequence, 141 residues long: Light-regulated protein 1, chloroplastic (141 aa).

Residues 1-41 constitute a chloroplast transit peptide; sequence MQGALFIKPTILLPLPSSVSSPKLTFLLPHATKASRLSSLR. Residues 35-51 show a composition bias toward low complexity; that stretch reads SRLSSLRSNNSSSSSSL. The interval 35–58 is disordered; it reads SRLSSLRSNNSSSSSSLTSDPNTV. Positions 58–132 are 2 X 15 AA approximate repeats; the sequence is VDYNSSILSV…ACDDLGGEFC (75 aa). 2 tandem repeats follow at residues 67–81 and 118–132.

In terms of assembly, component of high molecular weight thylakoid LFNRs-containing protein complexes containing LIR1, LFNR1, LFNR2, TIC62 and TROL proteins. Interacts directly with LFNR1 and LFNR2; LIR1 increases the affinity of LFNR1 and LFNR2 for TIC62 and subsequent thylakoid relocalization. In terms of processing, may form interchain disulfide bonds with LFNR1 and LFNR2.

It is found in the plastid. Its subcellular location is the chloroplast thylakoid membrane. It localises to the chloroplast envelope. The protein resides in the chloroplast stroma. Thylakoid-determinant subunit of high molecular weight LFNRs-containing protein complexes. This is Light-regulated protein 1, chloroplastic from Arabidopsis thaliana (Mouse-ear cress).